The primary structure comprises 71 residues: Conotoxin LvVIIB (71 aa).

The first 17 residues, valine 1 to alanine 17, serve as a signal peptide directing secretion. Residues aspartate 18–arginine 42 constitute a propeptide that is removed on maturation. 3 cysteine pairs are disulfide-bonded: cysteine 43/cysteine 57, cysteine 50/cysteine 62, and cysteine 56/cysteine 69.

The protein belongs to the conotoxin O1 superfamily. As to expression, expressed by the venom duct.

The protein localises to the secreted. This is Conotoxin LvVIIB from Conus lividus (Livid cone).